The following is a 274-amino-acid chain: Ribosome biogenesis protein UTP30 (274 aa).

The protein belongs to the universal ribosomal protein uL1 family. Highly divergent. As to quaternary structure, component of the 90S pre-ribosomes. Interacts with FAF1.

It is found in the nucleus. It localises to the nucleolus. Involved in rRNA-processing and ribosome biosynthesis. This is Ribosome biogenesis protein UTP30 (UTP30) from Saccharomyces cerevisiae (strain ATCC 204508 / S288c) (Baker's yeast).